A 356-amino-acid chain; its full sequence is Probable dual-specificity RNA methyltransferase RlmN (356 aa).

The Proton acceptor role is filled by Glu97. Residues 103-333 (YHHGNSVCIS…VTIRREMGSD (231 aa)) form the Radical SAM core domain. Residues Cys110 and Cys338 are joined by a disulfide bond. [4Fe-4S] cluster-binding residues include Cys117, Cys121, and Cys124. S-adenosyl-L-methionine is bound by residues 164–165 (GE), Ser196, 219–221 (SLH), and Asn295. The active-site S-methylcysteine intermediate is Cys338.

The protein belongs to the radical SAM superfamily. RlmN family. It depends on [4Fe-4S] cluster as a cofactor.

Its subcellular location is the cytoplasm. The enzyme catalyses adenosine(2503) in 23S rRNA + 2 reduced [2Fe-2S]-[ferredoxin] + 2 S-adenosyl-L-methionine = 2-methyladenosine(2503) in 23S rRNA + 5'-deoxyadenosine + L-methionine + 2 oxidized [2Fe-2S]-[ferredoxin] + S-adenosyl-L-homocysteine. It catalyses the reaction adenosine(37) in tRNA + 2 reduced [2Fe-2S]-[ferredoxin] + 2 S-adenosyl-L-methionine = 2-methyladenosine(37) in tRNA + 5'-deoxyadenosine + L-methionine + 2 oxidized [2Fe-2S]-[ferredoxin] + S-adenosyl-L-homocysteine. In terms of biological role, specifically methylates position 2 of adenine 2503 in 23S rRNA and position 2 of adenine 37 in tRNAs. The polypeptide is Probable dual-specificity RNA methyltransferase RlmN (Lachnoclostridium phytofermentans (strain ATCC 700394 / DSM 18823 / ISDg) (Clostridium phytofermentans)).